The following is a 312-amino-acid chain: MKTLPKFKPFVQTCSDCGETQNIVEDYKNGYHVCGRCGCIVGNRIIDEGSEWRSFGDSNKVDPCRIGSASNPYLESEQLDTMISTGGGMNSYVLSKIQMKNSMRGPERALKHGMNLITAFCERSNLSRTIIDRAHYIFKNIEERKLLKGKNVEGIVAACIYIACRQEECPRTFKEISVMTAVQKREIGRCFKLISPHLERMATMSTENIIARFCSDLNLNIKIQKIATEIAKAAHELGCLAGKSPDSIAAAVIYMVTNLFPEEKKIQKDIQFVTNVTEVTIKNTYKELLTFKYDIIPENMVNKESIDKLPGY.

The TFIIB-type zinc-finger motif lies at 10–42; that stretch reads FVQTCSDCGETQNIVEDYKNGYHVCGRCGCIVG. Cys-14, Cys-17, Cys-34, and Cys-37 together coordinate Zn(2+). 2 consecutive repeat copies span residues 120 to 196 and 213 to 290.

It belongs to the TFIIB family. As to quaternary structure, associates with TFIID-IIA (DA complex) to form TFIID-IIA-IIB (DAB-complex) which is then recognized by polymerase II.

The protein localises to the nucleus. In terms of biological role, general factor that plays a major role in the activation of eukaryotic genes transcribed by RNA polymerase II. In Encephalitozoon cuniculi (strain GB-M1) (Microsporidian parasite), this protein is Transcription initiation factor IIB.